We begin with the raw amino-acid sequence, 162 residues long: NADH-quinone oxidoreductase subunit I (162 aa).

4Fe-4S ferredoxin-type domains are found at residues L52 to G82 and T93 to N122. The [4Fe-4S] cluster site is built by C62, C65, C68, C72, C102, C105, C108, and C112.

Belongs to the complex I 23 kDa subunit family. As to quaternary structure, NDH-1 is composed of 14 different subunits. Subunits NuoA, H, J, K, L, M, N constitute the membrane sector of the complex. The cofactor is [4Fe-4S] cluster.

It is found in the cell inner membrane. It carries out the reaction a quinone + NADH + 5 H(+)(in) = a quinol + NAD(+) + 4 H(+)(out). NDH-1 shuttles electrons from NADH, via FMN and iron-sulfur (Fe-S) centers, to quinones in the respiratory chain. The immediate electron acceptor for the enzyme in this species is believed to be ubiquinone. Couples the redox reaction to proton translocation (for every two electrons transferred, four hydrogen ions are translocated across the cytoplasmic membrane), and thus conserves the redox energy in a proton gradient. The protein is NADH-quinone oxidoreductase subunit I of Methylorubrum populi (strain ATCC BAA-705 / NCIMB 13946 / BJ001) (Methylobacterium populi).